The following is a 366-amino-acid chain: Histidinol-phosphate aminotransferase 2 (366 aa).

Lys226 is modified (N6-(pyridoxal phosphate)lysine).

It belongs to the class-II pyridoxal-phosphate-dependent aminotransferase family. Histidinol-phosphate aminotransferase subfamily. In terms of assembly, homodimer. Pyridoxal 5'-phosphate serves as cofactor.

The enzyme catalyses L-histidinol phosphate + 2-oxoglutarate = 3-(imidazol-4-yl)-2-oxopropyl phosphate + L-glutamate. The protein operates within amino-acid biosynthesis; L-histidine biosynthesis; L-histidine from 5-phospho-alpha-D-ribose 1-diphosphate: step 7/9. The sequence is that of Histidinol-phosphate aminotransferase 2 from Haemophilus influenzae (strain 86-028NP).